The following is an 868-amino-acid chain: Leucine--tRNA ligase (868 aa).

The 'HIGH' region motif lies at Pro-42–His-52. Residues Lys-627–Ser-631 carry the 'KMSKS' region motif. ATP is bound at residue Lys-630.

The protein belongs to the class-I aminoacyl-tRNA synthetase family.

The protein resides in the cytoplasm. It catalyses the reaction tRNA(Leu) + L-leucine + ATP = L-leucyl-tRNA(Leu) + AMP + diphosphate. This Pseudomonas putida (strain ATCC 700007 / DSM 6899 / JCM 31910 / BCRC 17059 / LMG 24140 / F1) protein is Leucine--tRNA ligase.